We begin with the raw amino-acid sequence, 1048 residues long: Transcription factor mef2A (1048 aa).

In terms of domain architecture, MADS-box spans 1-61 (MGRNKITIEK…NKLFQYSSRD (61 aa)). The segment covering 74-85 (DNTRKNLTNQDY) has biased composition (polar residues). 4 disordered regions span residues 74-263 (DNTR…QAAQ), 294-339 (QQQH…QQQQ), 386-812 (GIYG…NINT), and 916-1048 (LLLT…EPKN). Positions 97 to 110 (DDEDGDDDGDEDLG) are enriched in acidic residues. 7 stretches are compositionally biased toward low complexity: residues 130-205 (NNNN…NANH), 212-263 (GNSA…QAAQ), 294-303 (QQQHQQQQQN), 327-339 (QQQQ…QQQQ), 393-437 (PPQM…IMNK), 446-466 (YYDY…NSNG), and 481-500 (QQQS…HQSP). Residues 249–304 (NNNSNGYQQQQQAAQQAVQQAQMAQQMHLQQQQQYQQLQHIQQQQQQQHQQQQQNM) are a coiled coil. The segment covering 506-522 (YSPQQQSPVLNSQNGHH) has biased composition (polar residues). Basic residues predominate over residues 529–539 (HQMHHQQHQHQ). A compositionally biased stretch (low complexity) spans 540–593 (QHPQMQQQQQQQQQHQQHPQMQQIQQQQHPQMQQHQQHQQQHPQMQQQHMNNHQ). Over residues 600–618 (NSSPEINSQKNVHSSPLIM) the composition is skewed to polar residues. The segment covering 619–699 (NSNNNNNNNN…NSNNGNNNNN (81 aa)) has biased composition (low complexity). Positions 715–736 (SSPTIPEQPSINVSTSSNSAHV) are enriched in polar residues. Composition is skewed to low complexity over residues 738–802 (NNIT…SSST), 924–960 (SNNS…SSSS), and 982–1029 (NNNN…NNSN).

The protein localises to the nucleus. Its function is as follows. Transcription factor that regulates cell differentiation during development. Seems to negatively regulate prestalk gene expression and positively regulate prespore gene expression. The protein is Transcription factor mef2A (mef2A) of Dictyostelium discoideum (Social amoeba).